The primary structure comprises 89 residues: MVVVRLARGGAKKRPFYSMVVADSRNRRDGKFIERVGFYNPRATGGEESLRIQMDRLTYWQSKGAQLSDTVSRLVKQFGRQQKAAQPQE.

This sequence belongs to the bacterial ribosomal protein bS16 family.

This chain is Small ribosomal subunit protein bS16, found in Nitrosomonas europaea (strain ATCC 19718 / CIP 103999 / KCTC 2705 / NBRC 14298).